Reading from the N-terminus, the 141-residue chain is Nucleoside diphosphate kinase (141 aa).

ATP-binding residues include Lys-11, Phe-59, Arg-87, Thr-93, Arg-104, and Asn-114. His-117 (pros-phosphohistidine intermediate) is an active-site residue.

It belongs to the NDK family. In terms of assembly, homotetramer. The cofactor is Mg(2+).

It localises to the cytoplasm. It catalyses the reaction a 2'-deoxyribonucleoside 5'-diphosphate + ATP = a 2'-deoxyribonucleoside 5'-triphosphate + ADP. It carries out the reaction a ribonucleoside 5'-diphosphate + ATP = a ribonucleoside 5'-triphosphate + ADP. Major role in the synthesis of nucleoside triphosphates other than ATP. The ATP gamma phosphate is transferred to the NDP beta phosphate via a ping-pong mechanism, using a phosphorylated active-site intermediate. This Bordetella avium (strain 197N) protein is Nucleoside diphosphate kinase.